The sequence spans 357 residues: G-protein coupled receptor 183 (357 aa).

Over 1-27 (MANNFTTPLATSHGNNCDLYAHHSTAR) the chain is Extracellular. Asn4 carries an N-linked (GlcNAc...) asparagine glycan. Residues 28–53 (VLMPLHYSLVFIIGLVGNLLALVVIV) form a helical membrane-spanning segment. Residues 54–73 (QNRKKINSTTLYSMNLVISD) are Cytoplasmic-facing. A helical transmembrane segment spans residues 74-91 (ILFTTALPTRIAYYALGF). Arg83 contributes to the 7alpha,25-dihydroxycholesterol binding site. Over 92 to 101 (DWRIGDALCR) the chain is Extracellular. Cys100 and Cys177 form a disulfide bridge. A helical transmembrane segment spans residues 102-123 (VTALVFYINTYAGVNFMTCLSI). 7alpha,25-dihydroxycholesterol contacts are provided by Tyr108 and Tyr112. The segment at 122–130 (SIDRFFAVV) is interaction with G proteins. Residues 124–145 (DRFFAVVHPLRYNKIKRIEYAK) lie on the Cytoplasmic side of the membrane. The helical transmembrane segment at 146–164 (GVCLSVWILVFAQTLPLLL) threads the bilayer. Residues 165–188 (TPMSKEEGDKTTCMEYPNFEGTAS) lie on the Extracellular side of the membrane. The helical transmembrane segment at 189 to 211 (LPWILLGACLLGYVLPITVILLC) threads the bilayer. Topologically, residues 212 to 237 (YSQICCKLFRTAKQNPLTEKSGVNKK) are cytoplasmic. A helical transmembrane segment spans residues 238–261 (ALNTIILIIVVFILCFTPYHVAII). Tyr256 contacts 7alpha,25-dihydroxycholesterol. Topologically, residues 262–283 (QHMIKMLCSPGALECGARHSFQ) are extracellular. The chain crosses the membrane as a helical span at residues 284 to 308 (ISLHFTVCLMNFNCCMDPFIYFFAC). The Cytoplasmic segment spans residues 309-357 (KGYKRKVMKMLKRQVSVSISSAVRSAPEENSREMTESQMMIHSKASNGR). Phosphoserine is present on residues Ser324 and Ser345. The tract at residues 336-357 (EENSREMTESQMMIHSKASNGR) is disordered. Positions 344–357 (ESQMMIHSKASNGR) are enriched in polar residues.

Belongs to the G-protein coupled receptor 1 family. As to quaternary structure, homodimer and heterodimer. Heterodimerizes with CXCR5; leading to modulate the interaction between of CXCL13 and CXCR5. In terms of tissue distribution, expressed in mature B-cells and increases in expression early after activation, before being down-regulated in germinal center B-cells. Expressed in astrocytes. Specifically expressed in CD4(+) dendritic cells but not in CD8(+) dendritic cells. Expressed in monocyte/osteoclasts precursors and mature osteoclasts.

The protein resides in the cell membrane. G-protein coupled receptor expressed in lymphocytes that acts as a chemotactic receptor for B-cells, T-cells, splenic dendritic cells, monocytes/macrophages and astrocytes. Receptor for oxysterol 7-alpha,25-dihydroxycholesterol (7-alpha,25-OHC) and other related oxysterols. Mediates cell positioning and movement of a number of cells by binding the 7-alpha,25-OHC ligand that forms a chemotactic gradient. Binding of 7-alpha,25-OHC mediates the correct localization of B-cells during humoral immune responses. Collaborates with CXCR5 to mediate B-cell migration; probably by forming a heterodimer with CXCR5 that affects the interaction between of CXCL13 and CXCR5. Guides B-cell movement along the B-cell zone-T-cell zone boundary and later to interfollicular and outer follicular regions. Its specific expression during B-cell maturation helps position B-cells appropriately for mounting T-dependent antibody responses. Also acts as a chemotactic receptor for some T-cells upon binding to 7-alpha,25-OHC ligand. Promotes follicular helper T (Tfh) cells differentiation by positioning activated T-cells at the follicle-T-zone interface, promoting contact of newly activated CD4 T-cells with activated dendritic cells and exposing them to Tfh-cell-promoting inducible costimulator (ICOS) ligand. Expression in splenic dendritic cells is required for their homeostasis, localization and ability to induce B- and T-cell responses: GPR183 acts as a chemotactic receptor in dendritic cells that mediates the accumulation of CD4(+) dendritic cells in bridging channels. Regulates migration of astrocytes and is involved in communication between astrocytes and macrophages. Promotes osteoclast precursor migration to bone surfaces. Signals constitutively through G(i)-alpha, but not G(s)-alpha or G(q)-alpha. Signals constitutively also via MAPK1/3 (ERK1/2). The protein is G-protein coupled receptor 183 of Mus musculus (Mouse).